Reading from the N-terminus, the 490-residue chain is Probable cytochrome P450 308a1 (490 aa).

Position 431 (cysteine 431) interacts with heme.

This sequence belongs to the cytochrome P450 family. Heme serves as cofactor.

The protein resides in the endoplasmic reticulum membrane. The protein localises to the microsome membrane. Functionally, may be involved in the metabolism of insect hormones and in the breakdown of synthetic insecticides. The sequence is that of Probable cytochrome P450 308a1 (Cyp308a1) from Drosophila melanogaster (Fruit fly).